The following is a 110-amino-acid chain: AFLLAATLTISSHMQEAGAVKFDIKNQCGYTVWAAGLPGGGKRLDQGQTWTVNLAAGTASARFWGRTGCTFDASGKGSCQTGDCGRQLSCTVSGAVPATLAEYTQSDQDY.

An N-terminal signal peptide occupies residues 1 to 19; sequence AFLLAATLTISSHMQEAGA.

The protein belongs to the thaumatin family.

This chain is Pathogenesis-related protein, found in Juniperus virginiana (Eastern redcedar).